A 127-amino-acid polypeptide reads, in one-letter code: Small ribosomal subunit protein uS11 (127 aa).

It belongs to the universal ribosomal protein uS11 family. As to quaternary structure, part of the 30S ribosomal subunit. Interacts with proteins S7 and S18. Binds to IF-3.

In terms of biological role, located on the platform of the 30S subunit, it bridges several disparate RNA helices of the 16S rRNA. Forms part of the Shine-Dalgarno cleft in the 70S ribosome. The chain is Small ribosomal subunit protein uS11 from Streptococcus pyogenes serotype M1.